Consider the following 595-residue polypeptide: Grainyhead-like protein 3 homolog (595 aa).

The tract at residues 29–92 (DAWSKYLENP…CDQVKRSCSE (64 aa)) is transcription activation. The 234-residue stretch at 221 to 454 (ANRDFEYTLE…DMETHPVLFI (234 aa)) folds into the Grh/CP2 DB domain. Positions 484–505 (SSQSFPKGLEAPPSKQQTSEDS) are disordered.

Belongs to the grh/CP2 family. Grainyhead subfamily.

Its subcellular location is the nucleus. In terms of biological role, transcription factor playing important roles in primary neurulation and in the differentiation of stratified epithelia of both ectodermal and endodermal origin. Binds directly to the consensus DNA sequence 5'-AACCGGTT-3' acting as an activator and repressor on distinct target genes. The sequence is that of Grainyhead-like protein 3 homolog (grhl3) from Xenopus laevis (African clawed frog).